Consider the following 72-residue polypeptide: Translation initiation factor IF-1 (72 aa).

Residues 1 to 72 (MSKSDIIEMQ…TRGRITWRAK (72 aa)) form the S1-like domain.

The protein belongs to the IF-1 family. In terms of assembly, component of the 30S ribosomal translation pre-initiation complex which assembles on the 30S ribosome in the order IF-2 and IF-3, IF-1 and N-formylmethionyl-tRNA(fMet); mRNA recruitment can occur at any time during PIC assembly.

It localises to the cytoplasm. In terms of biological role, one of the essential components for the initiation of protein synthesis. Stabilizes the binding of IF-2 and IF-3 on the 30S subunit to which N-formylmethionyl-tRNA(fMet) subsequently binds. Helps modulate mRNA selection, yielding the 30S pre-initiation complex (PIC). Upon addition of the 50S ribosomal subunit IF-1, IF-2 and IF-3 are released leaving the mature 70S translation initiation complex. The protein is Translation initiation factor IF-1 of Clostridium perfringens (strain 13 / Type A).